The sequence spans 617 residues: Probable potassium transport system protein Kup 3 (617 aa).

Helical transmembrane passes span 42–62 (VASL…ALLI), 95–115 (LVVG…TPAI), 129–149 (PSLA…LFMM), 160–180 (IFGP…IHGI), 206–226 (VSFA…AMYA), 240–260 (WFAI…ALLI), 282–302 (LVAF…SGVF), 330–350 (IYVP…VLSF), 360–380 (YGIA…LVAI), 386–406 (PWLV…FFSA), and 411–431 (LFEG…MMLT).

Belongs to the HAK/KUP transporter (TC 2.A.72) family.

The protein resides in the cell inner membrane. It carries out the reaction K(+)(in) + H(+)(in) = K(+)(out) + H(+)(out). Transport of potassium into the cell. Likely operates as a K(+):H(+) symporter. This Bradyrhizobium diazoefficiens (strain JCM 10833 / BCRC 13528 / IAM 13628 / NBRC 14792 / USDA 110) protein is Probable potassium transport system protein Kup 3.